Here is a 142-residue protein sequence, read N- to C-terminus: Hemoglobin subunit alpha-A (142 aa).

A Globin domain is found at 2–142 (VLSAADKNNV…VGTVLTAKYR (141 aa)). An O2-binding site is contributed by His-59. His-88 is a binding site for heme b.

Belongs to the globin family. Heterotetramer of two alpha chains and two beta chains. Red blood cells.

Functionally, involved in oxygen transport from the lung to the various peripheral tissues. The chain is Hemoglobin subunit alpha-A (HBAA) from Gallus gallus (Chicken).